The sequence spans 277 residues: Shikimate dehydrogenase (NADP(+)) (277 aa).

Shikimate is bound by residues 15 to 17 (SLS) and Thr62. The Proton acceptor role is filled by Lys66. 2 residues coordinate shikimate: Asn87 and Asp102. Residues 127–131 (GSGGA), 151–156 (NRTVDK), and Ile219 each bind NADP(+). Residue Tyr221 participates in shikimate binding. Residue Gly242 coordinates NADP(+).

Belongs to the shikimate dehydrogenase family. Homodimer.

The enzyme catalyses shikimate + NADP(+) = 3-dehydroshikimate + NADPH + H(+). Its pathway is metabolic intermediate biosynthesis; chorismate biosynthesis; chorismate from D-erythrose 4-phosphate and phosphoenolpyruvate: step 4/7. Its function is as follows. Involved in the biosynthesis of the chorismate, which leads to the biosynthesis of aromatic amino acids. Catalyzes the reversible NADPH linked reduction of 3-dehydroshikimate (DHSA) to yield shikimate (SA). The chain is Shikimate dehydrogenase (NADP(+)) from Bacillus cereus (strain B4264).